The chain runs to 873 residues: Serine/threonine-protein phosphatase 4 regulatory subunit 4 (873 aa).

3 HEAT repeats span residues 213–251, 252–290, and 392–427; these read ILPLVKSLCQDVEYEVRSCMCRQLENIAQGIGTELTKSV, VLPELIELSRDEGSSVRLAAFETLVNLLDIFDTDDRSQT, and NFHMELYSTFFCLCHDPEVPVRYTIAICFYEVSKLL. Positions 686–720 form a coiled coil; the sequence is QKKFYEKDLLDQEKEREELLLLEMEQLEKEKQQND. Positions 713–737 are enriched in basic and acidic residues; it reads EKEKQQNDGRPMSDKMFEKKRRDTK. The interval 713-766 is disordered; it reads EKEKQQNDGRPMSDKMFEKKRRDTKTPTQSLPKNIPISVPGPSSVTPSTSKEIK. Residues 747-762 are compositionally biased toward low complexity; sequence IPISVPGPSSVTPSTS. A Phosphoserine modification is found at Ser775. Thr797 bears the Phosphothreonine mark. Positions 822–858 are enriched in polar residues; that stretch reads TRNASSVPSSFSPNTPLPSTSRGTGNSVDPKSSGSKD. The disordered stretch occupies residues 822–873; sequence TRNASSVPSSFSPNTPLPSTSRGTGNSVDPKSSGSKDTQPRKATLKSRKSNP. Positions 864 to 873 are enriched in basic residues; that stretch reads ATLKSRKSNP.

As to quaternary structure, serine/threonine-protein phosphatase 4 (PP4) occurs in different assemblies of the catalytic and one or more regulatory subunits. Component of the PP4 complex PPP4C-PPP4R4.

The protein localises to the cytoplasm. Putative regulatory subunit of serine/threonine-protein phosphatase 4. The polypeptide is Serine/threonine-protein phosphatase 4 regulatory subunit 4 (PPP4R4) (Homo sapiens (Human)).